The chain runs to 144 residues: Putative low molecular weight protein-tyrosine-phosphatase (144 aa).

The active-site Nucleophile is the C9. Residue R15 is part of the active site. D115 (proton donor) is an active-site residue.

The protein belongs to the low molecular weight phosphotyrosine protein phosphatase family.

The enzyme catalyses O-phospho-L-tyrosyl-[protein] + H2O = L-tyrosyl-[protein] + phosphate. The chain is Putative low molecular weight protein-tyrosine-phosphatase from Klebsiella pneumoniae.